Reading from the N-terminus, the 731-residue chain is Auxin response factor 3 (731 aa).

Low complexity predominate over residues 1–22; that stretch reads MASSASSSSSPSSRPPLMALPS. The tract at residues 1 to 41 is disordered; it reads MASSASSSSSPSSRPPLMALPSFYRPPWPSERGGEQRATDC. Residues 191–293 constitute a DNA-binding region (TF-B3); it reads FCKTLTASDT…ELRLGVRRAT (103 aa).

The protein belongs to the ARF family. In terms of assembly, homo and heterodimers. As to expression, expressed in roots, culms, leaves and young panicles.

The protein localises to the nucleus. Auxin response factors (ARFs) are transcriptional factors that bind specifically to the DNA sequence 5'-TGTCTC-3' found in the auxin-responsive promoter elements (AuxREs). The polypeptide is Auxin response factor 3 (ARF3) (Oryza sativa subsp. japonica (Rice)).